Reading from the N-terminus, the 354-residue chain is Photosystem II protein D1 3 (354 aa).

The next 3 helical transmembrane spans lie at 29–46 (YIGW…TATT), 118–133 (HFLI…EWEL), and 142–156 (WIAV…AATA). H118 is a binding site for chlorophyll a. Pheophytin a is bound at residue Y126. Residues D170 and E189 each contribute to the [CaMn4O5] cluster site. Residues 197–218 (FHQLGVAGVFGGALFSAMHGSL) traverse the membrane as a helical segment. H198 serves as a coordination point for chlorophyll a. A quinone-binding positions include H215 and 264-265 (SF). H215 lines the Fe cation pocket. H272 contacts Fe cation. The chain crosses the membrane as a helical span at residues 274 to 288 (FLAAWPVIGIWFTAL). H332, E333, D342, and A344 together coordinate [CaMn4O5] cluster. The propeptide occupies 345 to 354 (AVEVAPAVRG).

Belongs to the reaction center PufL/M/PsbA/D family. In terms of assembly, PSII is composed of 1 copy each of membrane proteins PsbA, PsbB, PsbC, PsbD, PsbE, PsbF, PsbH, PsbI, PsbJ, PsbK, PsbL, PsbM, PsbT, PsbX, PsbY, PsbZ, Psb30/Ycf12, peripheral proteins PsbO, CyanoQ (PsbQ), PsbU, PsbV and a large number of cofactors. It forms dimeric complexes. The D1/D2 heterodimer binds P680, chlorophylls that are the primary electron donor of PSII, and subsequent electron acceptors. It shares a non-heme iron and each subunit binds pheophytin, quinone, additional chlorophylls, carotenoids and lipids. D1 provides most of the ligands for the Mn4-Ca-O5 cluster of the oxygen-evolving complex (OEC). There is also a Cl(-1) ion associated with D1 and D2, which is required for oxygen evolution. The PSII complex binds additional chlorophylls, carotenoids and specific lipids. serves as cofactor. In terms of processing, tyr-161 forms a radical intermediate that is referred to as redox-active TyrZ, YZ or Y-Z. C-terminally processed by CtpA; processing is essential to allow assembly of the oxygen-evolving complex and thus photosynthetic growth.

It is found in the cellular thylakoid membrane. The enzyme catalyses 2 a plastoquinone + 4 hnu + 2 H2O = 2 a plastoquinol + O2. In terms of biological role, photosystem II (PSII) is a light-driven water:plastoquinone oxidoreductase that uses light energy to abstract electrons from H(2)O, generating O(2) and a proton gradient subsequently used for ATP formation. It consists of a core antenna complex that captures photons, and an electron transfer chain that converts photonic excitation into a charge separation. The D1/D2 (PsbA/PsbD) reaction center heterodimer binds P680, the primary electron donor of PSII as well as several subsequent electron acceptors. This chain is Photosystem II protein D1 3, found in Synechococcus sp. (strain JA-3-3Ab) (Cyanobacteria bacterium Yellowstone A-Prime).